The chain runs to 166 residues: Deoxyuridine 5'-triphosphate nucleotidohydrolase (166 aa).

A disordered region spans residues 1 to 24; sequence MACVNEPSPKLQKLDRNGIHGDSS. A Mg(2+)-binding site is contributed by glutamate 138.

It belongs to the dUTPase family. As to quaternary structure, homotrimer. Mg(2+) serves as cofactor.

The catalysed reaction is dUTP + H2O = dUMP + diphosphate + H(+). The protein operates within pyrimidine metabolism; dUMP biosynthesis; dUMP from dCTP (dUTP route): step 2/2. This enzyme is involved in nucleotide metabolism: it produces dUMP, the immediate precursor of thymidine nucleotides and it decreases the intracellular concentration of dUTP, preventing uracil incorporation into DNA. The protein is Deoxyuridine 5'-triphosphate nucleotidohydrolase (DUT) of Arabidopsis thaliana (Mouse-ear cress).